The sequence spans 334 residues: Ornithine carbamoyltransferase, catabolic (334 aa).

Residues 57–60, Gln84, Arg108, and 135–138 each bind carbamoyl phosphate; these read STRT and HPTQ. L-ornithine-binding positions include Asn168, Asp232, and 236-237; that span reads SM. Carbamoyl phosphate is bound by residues 274–275 and Arg320; that span reads CL.

It belongs to the aspartate/ornithine carbamoyltransferase superfamily. OTCase family.

It localises to the cytoplasm. The enzyme catalyses carbamoyl phosphate + L-ornithine = L-citrulline + phosphate + H(+). It functions in the pathway amino-acid degradation; L-arginine degradation via ADI pathway; carbamoyl phosphate from L-arginine: step 2/2. Reversibly catalyzes the transfer of the carbamoyl group from carbamoyl phosphate (CP) to the N(epsilon) atom of ornithine (ORN) to produce L-citrulline. The chain is Ornithine carbamoyltransferase, catabolic (arcB) from Rhizobium meliloti (strain 1021) (Ensifer meliloti).